The following is a 757-amino-acid chain: Glutathione biosynthesis bifunctional protein GshAB (757 aa).

Residues Met-1 to Ala-337 are glutamate--cysteine ligase. The 264-residue stretch at Lys-494 to Val-757 folds into the ATP-grasp domain. Pro-521–Arg-580 provides a ligand contact to ATP. Residues Asp-702, Glu-723, and Asn-725 each contribute to the Mg(2+) site. 3 residues coordinate Mn(2+): Asp-702, Glu-723, and Asn-725.

In the N-terminal section; belongs to the glutamate--cysteine ligase type 1 family. Type 2 subfamily. Monomer. The cofactor is Mg(2+). Requires Mn(2+) as cofactor.

It carries out the reaction L-cysteine + L-glutamate + ATP = gamma-L-glutamyl-L-cysteine + ADP + phosphate + H(+). The catalysed reaction is gamma-L-glutamyl-L-cysteine + glycine + ATP = glutathione + ADP + phosphate + H(+). Its pathway is sulfur metabolism; glutathione biosynthesis; glutathione from L-cysteine and L-glutamate: step 1/2. The protein operates within sulfur metabolism; glutathione biosynthesis; glutathione from L-cysteine and L-glutamate: step 2/2. Synthesizes glutathione from L-glutamate and L-cysteine via gamma-L-glutamyl-L-cysteine. The polypeptide is Glutathione biosynthesis bifunctional protein GshAB (Mannheimia succiniciproducens (strain KCTC 0769BP / MBEL55E)).